Reading from the N-terminus, the 198-residue chain is Large ribosomal subunit protein bL25 (198 aa).

The protein belongs to the bacterial ribosomal protein bL25 family. CTC subfamily. As to quaternary structure, part of the 50S ribosomal subunit; part of the 5S rRNA/L5/L18/L25 subcomplex. Contacts the 5S rRNA. Binds to the 5S rRNA independently of L5 and L18.

This is one of the proteins that binds to the 5S RNA in the ribosome where it forms part of the central protuberance. The chain is Large ribosomal subunit protein bL25 from Streptomyces coelicolor (strain ATCC BAA-471 / A3(2) / M145).